Consider the following 386-residue polypeptide: Patatin-04/09 (386 aa).

The N-terminal stretch at 1-23 (MATTKSFLILFFMILATTSSTCA) is a signal peptide. The 198-residue stretch at 32–229 (LSIDGGGIKG…TVGDPALLSL (198 aa)) folds into the PNPLA domain. The GXGXXG signature appears at 36-41 (GGGIKG). Positions 75 to 79 (GTSTG) match the GXSXG motif. Serine 77 functions as the Nucleophile in the catalytic mechanism. A glycan (N-linked (GlcNAc...) asparagine) is linked at asparagine 115. Aspartate 215 acts as the Proton acceptor in catalysis. A DGA/G motif is present at residues 215–217 (DGG). Residues 321-384 (ENALNGTTTE…DRKKLRANKA (64 aa)) adopt a coiled-coil conformation. Asparagine 325 carries N-linked (GlcNAc...) asparagine glycosylation.

This sequence belongs to the patatin family. As to expression, tuber.

It localises to the vacuole. Its function is as follows. Probable lipolytic acyl hydrolase (LAH), an activity which is thought to be involved in the response of tubers to pathogens. This is Patatin-04/09 from Solanum tuberosum (Potato).